Reading from the N-terminus, the 85-residue chain is Large ribosomal subunit protein bL27 (85 aa).

The segment at 1-26 (MAHKKAGGSTRNGRDSESKRLGVKRF) is disordered.

It belongs to the bacterial ribosomal protein bL27 family.

The polypeptide is Large ribosomal subunit protein bL27 (Saccharophagus degradans (strain 2-40 / ATCC 43961 / DSM 17024)).